Reading from the N-terminus, the 159-residue chain is Olfactory receptor-like protein COR8 (159 aa).

Residues 1–16 lie on the Cytoplasmic side of the membrane; it reads VAICNPLLYTISMPKS. A helical transmembrane segment spans residues 17-41; that stretch reads LCMKLVAGSYLGGVLNSLTQTCCLL. At 42–82 the chain is on the extracellular side; that stretch reads PLPFCGPNVINHYFCDTNPLLKLTCSDGRLNELLLVTFNGT. Residue N80 is glycosylated (N-linked (GlcNAc...) asparagine). The helical transmembrane segment at 83-103 threads the bilayer; the sequence is ISMTVLLIIVISYVYILVSIL. Topologically, residues 104–116 are cytoplasmic; it reads SIRSARGRHKAFS. The helical transmembrane segment at 117-137 threads the bilayer; it reads TCASHLLTVTLFYVPAGLSHM. Residues 138-148 lie on the Extracellular side of the membrane; that stretch reads QPGSKYSLDME. A helical transmembrane segment spans residues 149 to 159; sequence KVTAVFYTLLV.

The protein belongs to the G-protein coupled receptor 1 family.

The protein resides in the cell membrane. Odorant receptor. In Gallus gallus (Chicken), this protein is Olfactory receptor-like protein COR8 (COR8).